Reading from the N-terminus, the 31-residue chain is LNKRCAGIGSFCGLPGLVDCCSGRCFIVCLP.

The propeptide occupies leucine 1–arginine 4. Intrachain disulfides connect cysteine 5–cysteine 21, cysteine 12–cysteine 25, and cysteine 20–cysteine 29.

This sequence belongs to the conotoxin O1 superfamily. In terms of tissue distribution, expressed by the venom duct.

The protein localises to the secreted. In terms of biological role, this toxin activates voltage-gated sodium channels. It shifts the voltage-dependence of activation to more hyperpolarized potentials but has only little effect on channel inactivation. It is active on Nav1.3/SCN3A (EC(50)=3.98 nM), Nav1.4/SCN4A (EC(50)=4.99 nM), Nav1.6/SCN8A (EC(50)=1.27 nM) and Nav1.7/SCN9A (EC(50)=2.42 nM) voltage-gated sodium channels. In vivo, it induces nocifensive or pain-like behaviors in mice when injected intraplantarly. This is Delta-conotoxin-like ErVIA from Conus eburneus (Ivory cone).